The chain runs to 311 residues: MGQRPFSPNHRSGVLNATTAGAVQFNVLGPLELNLRGTKLPLGTPKQRAVLAMLLLSRNQVVAADALVQAIWEKSPPARARRTVHTYICNLRRTLSDAGVDSRNILVSEPPGYRLLIGDRQQCDLDRFVAAKESGLRASAKGYFSEAIRYLDSALQNWRGPVLGDLRSFMFVQMFSRALTGDELLVHTKLAEAAIACGRADVVIPKLERLVAMHPYRESLWKQLMLGYYVNEYQSAAIDAYHRLKSTLAEELGVEPAPTIRALYHKILRQLPMDDLVGRVTRGRVDLRGGNGAKVEELTESDKDLLPIGLA.

A DNA-binding region (ompR/PhoB-type) is located at residues 15–117 (LNATTAGAVQ…SEPPGYRLLI (103 aa)).

This sequence belongs to the AfsR/DnrI/RedD regulatory family.

Acts as a positive transcriptional regulator of the molybdopterin biosynthesis moa1 locus, promoting the expression of the moaA1B1C1D1 genes. The sequence is that of Transcriptional regulatory protein MoaR1 (moaR1) from Mycobacterium bovis (strain BCG / Pasteur 1173P2).